The sequence spans 98 residues: Large ribosomal subunit protein uL23 (98 aa).

This sequence belongs to the universal ribosomal protein uL23 family. Part of the 50S ribosomal subunit. Contacts protein L29, and trigger factor when it is bound to the ribosome.

One of the early assembly proteins it binds 23S rRNA. One of the proteins that surrounds the polypeptide exit tunnel on the outside of the ribosome. Forms the main docking site for trigger factor binding to the ribosome. The chain is Large ribosomal subunit protein uL23 from Bifidobacterium longum (strain DJO10A).